Reading from the N-terminus, the 121-residue chain is Large ribosomal subunit protein bL12 (121 aa).

The protein belongs to the bacterial ribosomal protein bL12 family. In terms of assembly, homodimer. Part of the ribosomal stalk of the 50S ribosomal subunit. Forms a multimeric L10(L12)X complex, where L10 forms an elongated spine to which 2 to 4 L12 dimers bind in a sequential fashion. Binds GTP-bound translation factors.

Forms part of the ribosomal stalk which helps the ribosome interact with GTP-bound translation factors. Is thus essential for accurate translation. This Escherichia coli O45:K1 (strain S88 / ExPEC) protein is Large ribosomal subunit protein bL12.